Consider the following 644-residue polypeptide: DNA gyrase subunit B (644 aa).

Positions 429 to 543 (CEIFLVEGDS…AGYVYIAQPP (115 aa)) constitute a Toprim domain. Residues glutamate 435, aspartate 508, and aspartate 510 each coordinate Mg(2+).

Belongs to the type II topoisomerase GyrB family. Heterotetramer, composed of two GyrA and two GyrB chains. In the heterotetramer, GyrA contains the active site tyrosine that forms a transient covalent intermediate with DNA, while GyrB binds cofactors and catalyzes ATP hydrolysis. The cofactor is Mg(2+). It depends on Mn(2+) as a cofactor. Requires Ca(2+) as cofactor.

The protein localises to the cytoplasm. The catalysed reaction is ATP-dependent breakage, passage and rejoining of double-stranded DNA.. Functionally, a type II topoisomerase that negatively supercoils closed circular double-stranded (ds) DNA in an ATP-dependent manner to modulate DNA topology and maintain chromosomes in an underwound state. Negative supercoiling favors strand separation, and DNA replication, transcription, recombination and repair, all of which involve strand separation. Also able to catalyze the interconversion of other topological isomers of dsDNA rings, including catenanes and knotted rings. Type II topoisomerases break and join 2 DNA strands simultaneously in an ATP-dependent manner. This is DNA gyrase subunit B from Staphylococcus aureus (strain COL).